Reading from the N-terminus, the 662-residue chain is UvrABC system protein B (662 aa).

Positions lysine 25 to arginine 182 constitute a Helicase ATP-binding domain. Glycine 38 to threonine 45 contacts ATP. The Beta-hairpin signature appears at tyrosine 91–isoleucine 114. A Helicase C-terminal domain is found at glutamine 429–isoleucine 595. Residues aspartate 622–aspartate 657 enclose the UVR domain.

The protein belongs to the UvrB family. As to quaternary structure, forms a heterotetramer with UvrA during the search for lesions. Interacts with UvrC in an incision complex.

It localises to the cytoplasm. Its function is as follows. The UvrABC repair system catalyzes the recognition and processing of DNA lesions. A damage recognition complex composed of 2 UvrA and 2 UvrB subunits scans DNA for abnormalities. Upon binding of the UvrA(2)B(2) complex to a putative damaged site, the DNA wraps around one UvrB monomer. DNA wrap is dependent on ATP binding by UvrB and probably causes local melting of the DNA helix, facilitating insertion of UvrB beta-hairpin between the DNA strands. Then UvrB probes one DNA strand for the presence of a lesion. If a lesion is found the UvrA subunits dissociate and the UvrB-DNA preincision complex is formed. This complex is subsequently bound by UvrC and the second UvrB is released. If no lesion is found, the DNA wraps around the other UvrB subunit that will check the other stand for damage. This Clostridium botulinum (strain Langeland / NCTC 10281 / Type F) protein is UvrABC system protein B.